Consider the following 236-residue polypeptide: uncharacterized protein (236 aa).

Residues D22, N49, and K82 each coordinate NADP(+). Residues S100 and Y114 each act as proton donor in the active site. Residues Y114 and K118 each coordinate NADP(+). The Lowers pKa of active site Tyr role is filled by K118.

This sequence belongs to the short-chain dehydrogenases/reductases (SDR) family.

Its subcellular location is the cytoplasm. The protein resides in the nucleus. This is an uncharacterized protein from Schizosaccharomyces pombe (strain 972 / ATCC 24843) (Fission yeast).